The primary structure comprises 1005 residues: Probable beta-galactosidase A (1005 aa).

Positions 1–18 (MKLLSVAAVALLAAQAAG) are cleaved as a signal peptide. Residues Tyr96, Asn140, Ala141, and Glu142 each coordinate substrate. Asn156 is a glycosylation site (N-linked (GlcNAc...) asparagine). Asn199 provides a ligand contact to substrate. Glu200 serves as the catalytic Proton donor. Cysteines 205 and 206 form a disulfide. Tyr260 contacts substrate. The cysteines at positions 266 and 315 are disulfide-linked. The active-site Nucleophile is Glu298. Residue Tyr364 coordinates substrate. N-linked (GlcNAc...) asparagine glycosylation is found at Asn373, Asn402, Asn453, Asn478, Asn522, Asn622, Asn760, Asn777, Asn805, and Asn914.

Belongs to the glycosyl hydrolase 35 family.

It is found in the secreted. It catalyses the reaction Hydrolysis of terminal non-reducing beta-D-galactose residues in beta-D-galactosides.. In terms of biological role, cleaves beta-linked terminal galactosyl residues from gangliosides, glycoproteins, and glycosaminoglycans. The polypeptide is Probable beta-galactosidase A (lacA) (Aspergillus flavus (strain ATCC 200026 / FGSC A1120 / IAM 13836 / NRRL 3357 / JCM 12722 / SRRC 167)).